Here is a 492-residue protein sequence, read N- to C-terminus: Beta-glucosidase 38 (492 aa).

The first 21 residues, 1 to 21 (MNMPLLLLIAIVVVSLSHGNG), serve as a signal peptide directing secretion. Q45 serves as a coordination point for a beta-D-glucoside. N73 and N77 each carry an N-linked (GlcNAc...) asparagine glycan. Residues H146 and 191 to 192 (NE) each bind a beta-D-glucoside. Residue E192 is the Proton donor of the active site. Residues C211 and C214 are joined by a disulfide bond. A glycan (N-linked (GlcNAc...) asparagine) is linked at N310. Y331 is an a beta-D-glucoside binding site. N341 carries an N-linked (GlcNAc...) asparagine glycan. E400 lines the a beta-D-glucoside pocket. The active-site Nucleophile is the E400. N-linked (GlcNAc...) asparagine glycosylation is present at N408. A beta-D-glucoside is bound by residues W447, 454–455 (EW), and F463.

This sequence belongs to the glycosyl hydrolase 1 family.

It carries out the reaction Hydrolysis of terminal, non-reducing beta-D-glucosyl residues with release of beta-D-glucose.. This chain is Beta-glucosidase 38 (BGLU38), found in Oryza sativa subsp. japonica (Rice).